The chain runs to 62 residues: Ferredoxin-2 (62 aa).

4Fe-4S ferredoxin-type domains are found at residues 2 to 28 and 29 to 62; these read AHRITDECTYCAACEPECPVSAISAGD and SIYVIDENVCVDCIGYHDEPACVAVCPVDCIIKV. [4Fe-4S] cluster is bound by residues C9, C12, C15, C19, C38, C41, C50, and C54.

[4Fe-4S] cluster serves as cofactor.

In terms of biological role, ferredoxins are iron-sulfur proteins that transfer electrons in a wide variety of metabolic reactions. This chain is Ferredoxin-2, found in Chlorobaculum tepidum (strain ATCC 49652 / DSM 12025 / NBRC 103806 / TLS) (Chlorobium tepidum).